The sequence spans 387 residues: Mannitol-1-phosphate 5-dehydrogenase (387 aa).

Position 3–14 (3–14) interacts with NAD(+); that stretch reads ALHFGAGNIGRG.

The protein belongs to the mannitol dehydrogenase family.

The catalysed reaction is D-mannitol 1-phosphate + NAD(+) = beta-D-fructose 6-phosphate + NADH + H(+). This is Mannitol-1-phosphate 5-dehydrogenase from Yersinia pseudotuberculosis serotype IB (strain PB1/+).